The sequence spans 448 residues: Tryptophan dimethylallyltransferase 1 (448 aa).

Residues 80 to 81 (IL) and Glu-89 contribute to the L-tryptophan site. 3 residues coordinate substrate: Arg-100, Lys-186, and Tyr-188. L-tryptophan contacts are provided by Tyr-190 and Arg-249. 7 residues coordinate substrate: Arg-262, Lys-264, Tyr-266, Gln-348, Tyr-350, Tyr-414, and Tyr-418.

Belongs to the tryptophan dimethylallyltransferase family. Homodimer.

The enzyme catalyses L-tryptophan + dimethylallyl diphosphate = 4-(3-methylbut-2-enyl)-L-tryptophan + diphosphate. It functions in the pathway alkaloid biosynthesis; ergot alkaloid biosynthesis. In terms of biological role, tryptophan dimethylallyltransferase; part of the gene cluster that mediates the biosynthesis of fungal ergot alkaloid. DmaW catalyzes the first step of ergot alkaloid biosynthesis by condensing dimethylallyl diphosphate (DMAP) and tryptophan to form 4-dimethylallyl-L-tryptophan. The second step is catalyzed by the methyltransferase easF that methylates 4-dimethylallyl-L-tryptophan in the presence of S-adenosyl-L-methionine, resulting in the formation of 4-dimethylallyl-L-abrine. The catalase easC and the FAD-dependent oxidoreductase easE then transform 4-dimethylallyl-L-abrine to chanoclavine-I which is further oxidized by easD in the presence of NAD(+), resulting in the formation of chanoclavine-I aldehyde. Agroclavine dehydrogenase easG then mediates the conversion of chanoclavine-I aldehyde to agroclavine via a non-enzymatic adduct reaction: the substrate is an iminium intermediate that is formed spontaneously from chanoclavine-I aldehyde in the presence of glutathione. The presence of easA is not required to complete this reaction. Further conversion of agroclavine to paspalic acid is a two-step process involving oxidation of agroclavine to elymoclavine and of elymoclavine to paspalic acid, the second step being performed by the elymoclavine oxidase cloA. Paspalic acid is then further converted to D-lysergic acid. Ergopeptines are assembled from D-lysergic acid and three different amino acids by the D-lysergyl-peptide-synthetases composed each of a monomudular and a trimodular nonribosomal peptide synthetase subunit. LpsB and lpsC encode the monomodular subunits responsible for D-lysergic acid activation and incorporation into the ergopeptine backbone. LpsA1 and A2 subunits encode the trimodular nonribosomal peptide synthetase assembling the tripeptide portion of ergopeptines. LpsA1 is responsible for formation of the major ergopeptine, ergotamine, and lpsA2 for alpha-ergocryptine, the minor ergopeptine of the total alkaloid mixture elaborated by C.purpurea. D-lysergyl-tripeptides are assembled by the nonribosomal peptide synthetases and released as N-(D-lysergyl-aminoacyl)-lactams. Cyclolization of the D-lysergyl-tripeptides is performed by the Fe(2+)/2-ketoglutarate-dependent dioxygenase easH which introduces a hydroxyl group into N-(D-lysergyl-aminoacyl)-lactam at alpha-C of the aminoacyl residue followed by spontaneous condensation with the terminal lactam carbonyl group. The polypeptide is Tryptophan dimethylallyltransferase 1 (Claviceps purpurea (strain 20.1) (Ergot fungus)).